The chain runs to 1073 residues: Lon protease homolog, mitochondrial (1073 aa).

The transit peptide at 1-27 (MIKASKCNKARALFLVRTSIPRTFIRN) directs the protein to the mitochondrion. Composition is skewed to basic and acidic residues over residues 69 to 107 (FDSK…RKDI) and 113 to 123 (YDIKEETDSKP). Residues 69-173 (FDSKKEKQPS…DKEFLSPSDA (105 aa)) are disordered. Positions 132-150 (SSKSSISSSSGGANNNNNN) are enriched in low complexity. Positions 158-167 (DDGSPKDKEF) are enriched in basic and acidic residues. A Lon N-terminal domain is found at 177-395 (PPFLAIAMKD…LSLQLLQVEA (219 aa)). 543–550 (GPPGTGKT) is a binding site for ATP. A compositionally biased stretch (basic and acidic residues) spans 775 to 785 (SVISDKAKKDA). Positions 775-821 (SVISDKAKKDAGSSSIESNDSNTEAKVSTTTENEKKQEQKQKQDEEI) are disordered. Residues 790-805 (IESNDSNTEAKVSTTT) show a composition bias toward polar residues. The segment covering 806 to 821 (ENEKKQEQKQKQDEEI) has biased composition (basic and acidic residues). The Lon proteolytic domain maps to 856-1044 (TLNPGVATGL…SEVFEHLFKG (189 aa)). Active-site residues include Ser950 and Lys993.

The protein belongs to the peptidase S16 family. As to quaternary structure, homohexamer or homoheptamer. Organized in a ring with a central cavity.

Its subcellular location is the mitochondrion matrix. It catalyses the reaction Hydrolysis of proteins in presence of ATP.. Functionally, ATP-dependent serine protease that mediates the selective degradation of misfolded, unassembled or oxidatively damaged polypeptides as well as certain short-lived regulatory proteins in the mitochondrial matrix. May also have a chaperone function in the assembly of inner membrane protein complexes. Participates in the regulation of mitochondrial gene expression and in the maintenance of the integrity of the mitochondrial genome. Binds to mitochondrial DNA in a site-specific manner. This is Lon protease homolog, mitochondrial from Candida dubliniensis (strain CD36 / ATCC MYA-646 / CBS 7987 / NCPF 3949 / NRRL Y-17841) (Yeast).